The sequence spans 530 residues: Ubiquitin carboxyl-terminal hydrolase 17-like protein 21 (530 aa).

The USP domain occupies 80 to 375 (AGLQNMGNTC…QAYVLFYIQK (296 aa)). C89 (nucleophile) is an active-site residue. H334 functions as the Proton acceptor in the catalytic mechanism. Basic and acidic residues-rich tracts occupy residues 382-392 (SESVSRGREPR) and 398-412 (DTDR…KRDH). Disordered stretches follow at residues 382–412 (SESV…KRDH) and 477–530 (NHHP…LVCQ). The segment covering 493-505 (TPTHQESMNTGTL) has biased composition (polar residues). Residues 510-524 (GRARRSKGKNKHSKR) show a composition bias toward basic residues.

It belongs to the peptidase C19 family. USP17 subfamily.

Its subcellular location is the nucleus. It is found in the endoplasmic reticulum. It carries out the reaction Thiol-dependent hydrolysis of ester, thioester, amide, peptide and isopeptide bonds formed by the C-terminal Gly of ubiquitin (a 76-residue protein attached to proteins as an intracellular targeting signal).. Deubiquitinating enzyme that removes conjugated ubiquitin from specific proteins to regulate different cellular processes that may include cell proliferation, progression through the cell cycle, apoptosis, cell migration, and the cellular response to viral infection. In Homo sapiens (Human), this protein is Ubiquitin carboxyl-terminal hydrolase 17-like protein 21 (USP17L21).